The following is a 642-amino-acid chain: 1-deoxy-D-xylulose-5-phosphate synthase (642 aa).

Thiamine diphosphate-binding positions include H79 and 120 to 122 (AHS). Residue D155 coordinates Mg(2+). Thiamine diphosphate contacts are provided by residues 156–157 (GS), N184, Y293, and E375. N184 lines the Mg(2+) pocket.

The protein belongs to the transketolase family. DXPS subfamily. Homodimer. Mg(2+) is required as a cofactor. Thiamine diphosphate serves as cofactor.

The catalysed reaction is D-glyceraldehyde 3-phosphate + pyruvate + H(+) = 1-deoxy-D-xylulose 5-phosphate + CO2. Its pathway is metabolic intermediate biosynthesis; 1-deoxy-D-xylulose 5-phosphate biosynthesis; 1-deoxy-D-xylulose 5-phosphate from D-glyceraldehyde 3-phosphate and pyruvate: step 1/1. In terms of biological role, catalyzes the acyloin condensation reaction between C atoms 2 and 3 of pyruvate and glyceraldehyde 3-phosphate to yield 1-deoxy-D-xylulose-5-phosphate (DXP). This chain is 1-deoxy-D-xylulose-5-phosphate synthase, found in Ruegeria pomeroyi (strain ATCC 700808 / DSM 15171 / DSS-3) (Silicibacter pomeroyi).